An 883-amino-acid polypeptide reads, in one-letter code: Phosphoenolpyruvate carboxylase (883 aa).

Catalysis depends on residues H138 and K546.

Belongs to the PEPCase type 1 family. It depends on Mg(2+) as a cofactor.

It catalyses the reaction oxaloacetate + phosphate = phosphoenolpyruvate + hydrogencarbonate. In terms of biological role, forms oxaloacetate, a four-carbon dicarboxylic acid source for the tricarboxylic acid cycle. The polypeptide is Phosphoenolpyruvate carboxylase (Salmonella choleraesuis (strain SC-B67)).